The chain runs to 363 residues: RNA exonuclease NGL1 (363 aa).

A mitochondrion-targeting transit peptide spans 1–23 (MFTRRFIPVVQSTKQNIGKYVRK).

Belongs to the CCR4/nocturin family.

The protein resides in the mitochondrion. The polypeptide is RNA exonuclease NGL1 (NGL1) (Saccharomyces cerevisiae (strain ATCC 204508 / S288c) (Baker's yeast)).